The sequence spans 371 residues: S-adenosylmethionine:tRNA ribosyltransferase-isomerase (371 aa).

Belongs to the QueA family. In terms of assembly, monomer.

It is found in the cytoplasm. It catalyses the reaction 7-aminomethyl-7-carbaguanosine(34) in tRNA + S-adenosyl-L-methionine = epoxyqueuosine(34) in tRNA + adenine + L-methionine + 2 H(+). The protein operates within tRNA modification; tRNA-queuosine biosynthesis. In terms of biological role, transfers and isomerizes the ribose moiety from AdoMet to the 7-aminomethyl group of 7-deazaguanine (preQ1-tRNA) to give epoxyqueuosine (oQ-tRNA). The protein is S-adenosylmethionine:tRNA ribosyltransferase-isomerase of Rickettsia akari (strain Hartford).